Reading from the N-terminus, the 114-residue chain is Early 4 ORF4 protein (114 aa).

Positions 66 to 75 match the Nuclear localization signal motif; the sequence is RAKRRDRRRR.

Belongs to the adenoviridae E4 ORF4 family. As to quaternary structure, interacts with host BAZ1A/ACF1, host PPP2R2A/PP2a-B55alpha subunit, and host PPP2R5E/PP2a-B'B56 subunit. May interact with host SRC. Post-translationally, may be phosphorylated by host SRC kinase.

The protein resides in the host nucleus. Its subcellular location is the host cytoplasm. Functionally, plays a role in viral alternative pre-mRNA splicing. Activates dephosphorylation by protein phosphatase 2A of host SR proteins and converts their splicing properties. When expressed alone ex vivo, induces p53/TP53-independent apoptosis called cytoplasmic death. May mimic nutrient/growth signals to activate the host mTOR pathway. This Homo sapiens (Human) protein is Early 4 ORF4 protein.